The sequence spans 435 residues: Adenylosuccinate synthetase (435 aa).

Residues 11–17 and 39–41 each bind GTP; these read GDEGKGK and GHT. Catalysis depends on D12, which acts as the Proton acceptor. The Mg(2+) site is built by D12 and G39. IMP is bound by residues 12–15, 37–40, T128, R142, Q223, T238, and R302; these read DEGK and NAGH. H40 functions as the Proton donor in the catalytic mechanism. 298–304 serves as a coordination point for substrate; it reads SVTGRPR. GTP is bound by residues R304, 330–332, and 412–414; these read KLD and STG.

The protein belongs to the adenylosuccinate synthetase family. In terms of assembly, homodimer. The cofactor is Mg(2+).

The protein localises to the cytoplasm. The enzyme catalyses IMP + L-aspartate + GTP = N(6)-(1,2-dicarboxyethyl)-AMP + GDP + phosphate + 2 H(+). It participates in purine metabolism; AMP biosynthesis via de novo pathway; AMP from IMP: step 1/2. Its function is as follows. Plays an important role in the de novo pathway of purine nucleotide biosynthesis. Catalyzes the first committed step in the biosynthesis of AMP from IMP. The sequence is that of Adenylosuccinate synthetase from Coxiella burnetii (strain CbuK_Q154) (Coxiella burnetii (strain Q154)).